The primary structure comprises 588 residues: NADP-dependent malic enzyme 2 (588 aa).

The segment at 1–21 is disordered; that stretch reads MGSTPTDLPGEDVADNRSGVG. At Gly2 the chain carries N-acetylglycine. Residue Tyr136 is the Proton donor of the active site. Arg189 is a binding site for NADP(+). Catalysis depends on Lys207, which acts as the Proton acceptor. Glu279, Asp280, and Asp303 together coordinate a divalent metal cation. NADP(+)-binding positions include Asp303, 332–348, and Asn444; that span reads LFLGAGEAGTGIAELIA.

It belongs to the malic enzymes family. As to quaternary structure, homohexamers and homooctamers. Mg(2+) serves as cofactor. The cofactor is Mn(2+). Expressed in leaves, stems, flowers and roots. Particularly present in vasculatures, trichome basal cells and hydatodes.

The protein localises to the cytoplasm. It carries out the reaction (S)-malate + NADP(+) = pyruvate + CO2 + NADPH. The catalysed reaction is oxaloacetate + H(+) = pyruvate + CO2. With respect to regulation, activated by coenzyme A (CoA), aspartate, succinate and fumarate. Repressed by oxaloacetate, glucose and ATP. The polypeptide is NADP-dependent malic enzyme 2 (NADP-ME2) (Arabidopsis thaliana (Mouse-ear cress)).